A 468-amino-acid chain; its full sequence is MNKGRVTQIMGPVVDVKFDGGKLPEIYNALTVKQSNENGSMNLTFEVALHLGDDTVRTVAMSSTDGLVRGTEVEDTGKAISVPVGDATLGRVFNVLGDAIDLDGELPADVHRDPIHRQAPAFEELSTKVEILETGIKVVDLLAPYIKGGKIGLFGGAGVGKTVLIQELINNIAQEHGGISVFAGVGERTREGNDLYHEMSDSGVIKKTAMVFGQMNEPPGARQRVALTGLTMAEHFRDEQGQDVLLFIDNIFRFTQAGSEVSALLGRMPSAVGYQPTLATEMGQLQERITSTNKGSITSIQAVYVPADDYTDPAPATTFAHLDATTNLERRLTQMGIYPAVDPLASTSRALSPEIVGEEHYEVARQVQQTLQRYKELQDIIAILGMDELSEEDKLVVHRARRIQFFLSQNFHVAEQFTGQKGSYVPVKNTVSGFKEILEGKYDDLPEDAFRLVGGIEEVIENAKKMMA.

Residue 155–162 (GGAGVGKT) participates in ATP binding.

Belongs to the ATPase alpha/beta chains family. As to quaternary structure, F-type ATPases have 2 components, CF(1) - the catalytic core - and CF(0) - the membrane proton channel. CF(1) has five subunits: alpha(3), beta(3), gamma(1), delta(1), epsilon(1). CF(0) has three main subunits: a(1), b(2) and c(9-12). The alpha and beta chains form an alternating ring which encloses part of the gamma chain. CF(1) is attached to CF(0) by a central stalk formed by the gamma and epsilon chains, while a peripheral stalk is formed by the delta and b chains.

Its subcellular location is the cell membrane. It carries out the reaction ATP + H2O + 4 H(+)(in) = ADP + phosphate + 5 H(+)(out). Functionally, produces ATP from ADP in the presence of a proton gradient across the membrane. The catalytic sites are hosted primarily by the beta subunits. The protein is ATP synthase subunit beta of Bacillus cereus (strain B4264).